A 43-amino-acid chain; its full sequence is Thymosin beta-12 (43 aa).

2 stretches are compositionally biased toward basic and acidic residues: residues 1 to 25 and 33 to 43; these read MSDK…ETQE and ETIEQEKQATA. The tract at residues 1–43 is disordered; the sequence is MSDKPDLAEVSNFDKTKLKKTETQEKNPLPTKETIEQEKQATA. The residue at position 2 (serine 2) is an N-acetylserine.

Belongs to the thymosin beta family.

The protein resides in the cytoplasm. It localises to the cytoskeleton. Its function is as follows. Plays an important role in the organization of the cytoskeleton. Binds to and sequesters actin monomers (G actin) and therefore inhibits actin polymerization. The sequence is that of Thymosin beta-12 from Oncorhynchus mykiss (Rainbow trout).